A 438-amino-acid chain; its full sequence is Serine hydroxymethyltransferase (438 aa).

Residue 133 to 135 participates in (6S)-5,6,7,8-tetrahydrofolate binding; it reads GHI. Position 239 is an N6-(pyridoxal phosphate)lysine (Lys239).

This sequence belongs to the SHMT family. In terms of assembly, homodimer. The cofactor is pyridoxal 5'-phosphate.

It localises to the cytoplasm. It catalyses the reaction 5,10-methylenetetrahydromethanopterin + glycine + H2O = 5,6,7,8-tetrahydromethanopterin + L-serine. Its pathway is amino-acid biosynthesis; glycine biosynthesis; glycine from L-serine: step 1/1. Its function is as follows. Catalyzes the reversible interconversion of serine and glycine with tetrahydromethanopterin (H4MPT) serving as the one-carbon carrier. Also exhibits a pteridine-independent aldolase activity toward beta-hydroxyamino acids, producing glycine and aldehydes, via a retro-aldol mechanism. This is Serine hydroxymethyltransferase from Archaeoglobus fulgidus (strain ATCC 49558 / DSM 4304 / JCM 9628 / NBRC 100126 / VC-16).